A 326-amino-acid polypeptide reads, in one-letter code: Glyoxylate/hydroxypyruvate reductase B (326 aa).

Active-site residues include Arg-237 and Glu-266. The Proton donor role is filled by His-285.

Belongs to the D-isomer specific 2-hydroxyacid dehydrogenase family. GhrB subfamily. Homodimer.

The protein resides in the cytoplasm. The enzyme catalyses glycolate + NADP(+) = glyoxylate + NADPH + H(+). The catalysed reaction is (R)-glycerate + NAD(+) = 3-hydroxypyruvate + NADH + H(+). It carries out the reaction (R)-glycerate + NADP(+) = 3-hydroxypyruvate + NADPH + H(+). Catalyzes the NADPH-dependent reduction of glyoxylate and hydroxypyruvate into glycolate and glycerate, respectively. The sequence is that of Glyoxylate/hydroxypyruvate reductase B from Yersinia pseudotuberculosis serotype O:1b (strain IP 31758).